The primary structure comprises 405 residues: Serpin B12 (405 aa).

The disordered stretch occupies residues 64–83 (SQNESKEPDPCLKSNKQKAG).

This sequence belongs to the serpin family. Ov-serpin subfamily. Interacts with SLFN12; as part of a pathway regulating cell differentiation. May interact with USP14. In terms of tissue distribution, expressed in many tissues, including brain, bone marrow, lymph node, heart, lung, liver, pancreas, testis, ovary, and intestine.

It is found in the cytoplasm. Its function is as follows. Inhibits trypsin and plasmin, but not thrombin, coagulation factor Xa, or urokinase-type plasminogen activator. May play a role in cell differentiation. This chain is Serpin B12 (SERPINB12), found in Homo sapiens (Human).